The chain runs to 293 residues: Proximal tail tube connector protein (293 aa).

Disordered stretches follow at residues 106-166 (VGVK…FKRD) and 192-240 (QIEE…NDKL). Positions 112–126 (TKNDTDRNDNRDVKQ) are enriched in basic and acidic residues. Over residues 127 to 160 (DLTSNGTSSTDAKQNDTSKTTGNEKSSGSGSITD) the composition is skewed to polar residues. Positions 193-205 (IEEHNENKKRDTK) are enriched in basic and acidic residues. Over residues 206–231 (TSNTTDTTSNTTGTSTLDSDSKTSNK) the composition is skewed to low complexity.

It belongs to the phi29likevirus proximal tail tube connector protein family.

Its subcellular location is the virion. Functionally, forms the proximal part of the tail tube. The polypeptide is Proximal tail tube connector protein (11) (Bacillus phage PZA (Bacteriophage PZA)).